A 3065-amino-acid chain; its full sequence is MEEKQQIILANQDGGTVAGAAPTFFVILKQPGNGKTDQGILVTNQDACALASSVSSPVKSKGKICLPADCTVGGITVTLDNNSMWNEFYHRSTEMILTKQGRRMFPYCRYWITGLDSNLKYILVMDISPVDNHRYKWNGRWWEPSGKAEPHVLGRVFIHPESPSTGHYWMHQPVSFYKLKLTNNTLDQEGHIILHSMHRYLPRLHLVPAEKAVEVIQLNGPGVHTFTFPQTEFFAVTAYQNIQITQLKIDYNPFAKGFRDDGLNNKPQRDGKQKNSSDQEGNNISSSSGHRVRLTEGQGSEIQPGDLDPLSRGHETSGKGLEKTSLNIKRDFLGFMDTDSALSEVPQLKQEISECLIASSFEDDSRVASPLDQNGSFNVVIKEEPLDDYDYELGECPEGVTVKQEETDEETDVYSNSDDDPILEKQLKRHNKVDNPEADHLSSKWLPSSPSGVAKAKMFKLDTGKMPVVYLEPCAVTRSTVKISELPDNMLSTSRKDKSSMLAELEYLPTYIENSNETAFCLGKESENGLRKHSPDLRVVQKYPLLKEPQWKYPDISDSISTERILDDSKDSVGDSLSGKEDLGRKRTTMLKIATAAKVVNANQNASPNVPGKRGRPRKLKLCKAGRPPKNTGKSLISTKNTPVSPGSTFPDVKPDLEDVDGVLFVSFESKEALDIHAVDGTTEESSSLQASTTNDSGYRARISQLEKELIEDLKTLRHKQVIHPGLQEVGLKLNSVDPTMSIDLKYLGVQLPLAPATSFPFWNLTGTNPASPDAGFPFVSRTGKTNDFTKIKGWRGKFHSASASRNEGGNSESSLKNRSAFCSDKLDEYLENEGKLMETSMGFSSNAPTSPVVYQLPTKSTSYVRTLDSVLKKQSTISPSTSYSLKPHSVPPVSRKAKSQNRQATFSGRTKSSYKSILPYPVSPKQKYSHVILGDKVTKNSSGIISENQANNFVVPTLDENIFPKQISLRQAQQQQQQQQGSRPPGLSKSQVKLMDLEDCALWEGKPRTYITEERADVSLTTLLTAQASLKTKPIHTIIRKRAPPCNNDFCRLGCVCSSLALEKRQPAHCRRPDCMFGCTCLKRKVVLVKGGSKTKHFQRKAAHRDPVFYDTLGEEAREEEEGIREEEEQLKEKKKRKKLEYTICETEPEQPVRHYPLWVKVEGEVDPEPVYIPTPSVIEPMKPLLLPQPEVLSPTVKGKLLTGIKSPRSYTPKPNPVIREEDKDPVYLYFESMMTCARVRVYERKKEDQRQPSSSSSPSPSFQQQTSCHSSPENHNNAKEPDSEQQPLKQLTCDLEDDSDKLQEKSWKSSCNEGESSSTSYMHQRSPGGPTKLIEIISDCNWEEDRNKILSILSQHINSNMPQSLKVGSFIIELASQRKSRGEKNPPVYSSRVKISMPSCQDQDDMAEKSGSETPDGPLSPGKMEDISPVQTDALDSVRERLHGGKGLPFYAGLSPAGKLVAYKRKPSSSTSGLIQVASNAKVAASRKPRTLLPSTSNSKMASSSGTATNRPGKNLKAFVPAKRPIAARPSPGGVFTQFVMSKVGALQQKIPGVSTPQTLAGTQKFSIRPSPVMVVTPVVSSEPVQVCSPVTAAVTTTTPQVFLENTTAVTPMTAISDVETKETTYSSGATTTGVVEVSETNTSTSVTSTQSTATVNLTKTTGITTPVASVAFPKSLVASPSTITLPVASTASTSLVVVTAAASSSMVTTPTSSLGSVPIILSGINGSPPVSQRPENAAQIPVATPQVSPNTVKRAGPRLLLIPVQQGSPTLRPVSNTQLQGHRMVLQPVRSPSGMNLFRHPNGQIVQLLPLHQLRGSNTQPNLQPVMFRNPGSVMGIRLPAPSKPSETPPSSTSSSAFSVMNPVIQAVGSSSAVNVITQAPSLLSSGASFVSQAGTLTLRISPPEPQSFASKTGSETKITYSSGGQPVGTASLIPLQSGSFALLQLPGQKPVPSSILQHVASLQMKRESQNPDQKDETNSIKREQETKKVLQSEGEAVDPEANVIKQNSGAATSEETLNDSLEDRGDHLDEECLPEEGCATVKPSEHSCITGSHTDQDYKDVNEEYGARNRKSSKEKVAVLEVRTISEKASNKTVQNLSKVQHQKLGDVKVEQQKGFDNPEENSSEFPVTFKEESKFELSGSKVMEQQSNLQPEAKEKECGDSLEKDRERWRKHLKGPLTRKCVGASQECKKEADEQLIKETKTCQENSDVFQQEQGISDLLGKSGITEDARVLKTECDSWSRISNPSAFSIVPRRAAKSSRGNGHFQGHLLLPGEQIQPKQEKKGGRSSADFTVLDLEEDDEDDNEKTDDSIDEIVDVVSDYQSEEVDDVEKNNCVEYIEDDEEHVDIETVEELSEEINVAHLKTTAAHTQSFKQPSCTHISADEKAAERSRKAPPIPLKLKPDYWSDKLQKEAEAFAYYRRTHTANERRRRGEMRDLFEKLKITLGLLHSSKVSKSLILTRAFSEIQGLTDQADKLIGQKNLLTRKRNILIRKVSSLSGKTEEVVLKKLEYIYAKQQALEAQKRKKKMGSDEFDISPRISKQQEGSSASSVDLGQMFINNRRGKPLILSRKKDQATENTSPLNTPHTSANLVMTPQGQLLTLKGPLFSGPVVAVSPDLLESDLKPQVAGSAVALPENDDLFMMPRIVNVTSLATEGGLVDMGGSKYPHEVPDSKPSDHLKDTVRNEDNSLEDKGRISSRGNRDGRVTLGPTQVFLANKDSGYPQIVDVSNMQKAQEFLPKKISGDMRGIQYKWKESESRGERVKSKDSSFHKLKMKDLKDSSIEMELRKVTSAIEEAALDSSELLTNMEDEDDTDETLTSLLNEIAFLNQQLNDDSVGLAELPSSMDTEFPGDARRAFISKVPPGSRATFQVEHLGTGLKELPDVQGESDSISPLLLHLEDDDFSENEKQLAEPASEPDVLKIVIDSEIKDSLLSNKKAIDGGKNTSGLPAEPESVSSPPTLHMKTGLENSNSTDTLWRPMPKLAPLGLKVANPSSDADGQSLKVMPCLAPIAAKVGSVGHKMNLTGNDQEGRESKVMPTLAPVVAKLGNSGASPSSAGK.

Residues K4 and K178 each participate in a glycyl lysine isopeptide (Lys-Gly) (interchain with G-Cter in SUMO2) cross-link. A DNA-binding region (T-box) is located at residues 84-260 (MWNEFYHRST…YNPFAKGFRD (177 aa)). Positions 259–277 (RDDGLNNKPQRDGKQKNSS) are enriched in basic and acidic residues. Residues 259–322 (RDDGLNNKPQ…GHETSGKGLE (64 aa)) form a disordered region. Over residues 278–289 (DQEGNNISSSSG) the composition is skewed to polar residues. Basic and acidic residues predominate over residues 309 to 322 (PLSRGHETSGKGLE). Glycyl lysine isopeptide (Lys-Gly) (interchain with G-Cter in SUMO2) cross-links involve residues K323, K329, K349, K432, K460, K465, and K482. S534 is modified (phosphoserine). A Glycyl lysine isopeptide (Lys-Gly) (interchain with G-Cter in SUMO2) cross-link involves residue K570. The tract at residues 604 to 653 (QNASPNVPGKRGRPRKLKLCKAGRPPKNTGKSLISTKNTPVSPGSTFPDV) is disordered. S607 bears the Phosphoserine mark. K613 is covalently cross-linked (Glycyl lysine isopeptide (Lys-Gly) (interchain with G-Cter in SUMO2)). The segment covering 613-624 (KRGRPRKLKLCK) has biased composition (basic residues). Residues 632–648 (TGKSLISTKNTPVSPGS) are compositionally biased toward polar residues. The residue at position 645 (S645) is a Phosphoserine. Glycyl lysine isopeptide (Lys-Gly) (interchain with G-Cter in SUMO2) cross-links involve residues K654, K785, K791, K817, and K826. S851 carries the post-translational modification Phosphoserine. A disordered region spans residues 881-911 (STSYSLKPHSVPPVSRKAKSQNRQATFSGRT). The segment covering 901-911 (QNRQATFSGRT) has biased composition (polar residues). At S924 the chain carries Phosphoserine. A Glycyl lysine isopeptide (Lys-Gly) (interchain with G-Cter in SUMO2) cross-link involves residue K928. The interval 971-990 (RQAQQQQQQQQGSRPPGLSK) is disordered. The segment covering 972–981 (QAQQQQQQQQ) has biased composition (low complexity). Residues K990, K1091, K1140, K1162, K1199, and K1207 each participate in a glycyl lysine isopeptide (Lys-Gly) (interchain with G-Cter in SUMO2) cross-link. Residues 1111-1147 (YDTLGEEAREEEEGIREEEEQLKEKKKRKKLEYTICE) adopt a coiled-coil conformation. S1208 carries the phosphoserine modification. Disordered regions lie at residues 1246-1332 (RKKE…PGGP) and 1380-1429 (RKSR…MEDI). 2 stretches are compositionally biased toward low complexity: residues 1253–1269 (QPSS…QQTS) and 1310–1322 (KSSC…SSTS). 2 positions are modified to phosphoserine: S1430 and S1457. Residues K1461 and K1502 each participate in a glycyl lysine isopeptide (Lys-Gly) (interchain with G-Cter in SUMO2) cross-link. Disordered regions lie at residues 1488–1517 (SRKP…PGKN), 1905–1927 (SPPE…YSSG), and 1967–2029 (QMKR…EDRG). Composition is skewed to polar residues over residues 1495–1514 (LPST…TNRP) and 1911–1927 (SFAS…YSSG). Positions 1968–1994 (MKRESQNPDQKDETNSIKREQETKKVL) are enriched in basic and acidic residues. Glycyl lysine isopeptide (Lys-Gly) (interchain with G-Cter in SUMO2) cross-links involve residues K1985 and K1992. Residues 2008–2023 (IKQNSGAATSEETLND) are compositionally biased toward polar residues. Glycyl lysine isopeptide (Lys-Gly) (interchain with G-Cter in SUMO2) cross-links involve residues K2103, K2113, K2135, K2139, K2146, K2159, K2194, K2206, and K2238. The interval 2258–2316 (RRAAKSSRGNGHFQGHLLLPGEQIQPKQEKKGGRSSADFTVLDLEEDDEDDNEKTDDSI) is disordered. R2265 carries the omega-N-methylarginine modification. A Glycyl lysine isopeptide (Lys-Gly) (interchain with G-Cter in SUMO2) cross-link involves residue K2284. Positions 2300 to 2316 (DLEEDDEDDNEKTDDSI) are enriched in acidic residues. Glycyl lysine isopeptide (Lys-Gly) (interchain with G-Cter in SUMO2) cross-links involve residues K2378, K2413, K2457, and K2532. The 52-residue stretch at 2423–2474 (YYRRTHTANERRRRGEMRDLFEKLKITLGLLHSSKVSKSLILTRAFSEIQGL) folds into the bHLH domain. S2541 bears the Phosphoserine mark. K2546 is covalently cross-linked (Glycyl lysine isopeptide (Lys-Gly) (interchain with G-Cter in SUMO2)). A disordered region spans residues 2576–2595 (KKDQATENTSPLNTPHTSAN). Residues 2581-2595 (TENTSPLNTPHTSAN) are compositionally biased toward polar residues. Residues K2629, K2679, K2698, and K2784 each participate in a glycyl lysine isopeptide (Lys-Gly) (interchain with G-Cter in SUMO2) cross-link. The interval 2668-2709 (GSKYPHEVPDSKPSDHLKDTVRNEDNSLEDKGRISSRGNRDG) is disordered. The span at 2671–2709 (YPHEVPDSKPSDHLKDTVRNEDNSLEDKGRISSRGNRDG) shows a compositional bias: basic and acidic residues. Residues 2817–2841 (DDTDETLTSLLNEIAFLNQQLNDDS) are a coiled coil. A phosphoserine mark is found at S2910 and S2921. The segment at 2944-2968 (AIDGGKNTSGLPAEPESVSSPPTLH) is disordered. Residue S2978 is modified to Phosphoserine. K3041 participates in a covalent cross-link: Glycyl lysine isopeptide (Lys-Gly) (interchain with G-Cter in SUMO2).

As to quaternary structure, interacts with MAX. Requires dimerization with MAX for E-box binding. Component of some MLL1/MLL complex, at least composed of the core components KMT2A/MLL1, ASH2L, HCFC1/HCF1, WDR5 and RBBP5, as well as the facultative components BACC1, CHD8, E2F6, HSP70, INO80C, KANSL1, LAS1L, MAX, MCRS1, MGA, MYST1/MOF, PELP1, PHF20, PRP31, RING2, RUVB1/TIP49A, RUVB2/TIP49B, SENP3, TAF1, TAF4, TAF6, TAF7, TAF9 and TEX10. Interacts with ZMYND11. Highly expressed in germ cells and granulosa cells.

The protein resides in the nucleus. Its function is as follows. Functions as a dual-specificity transcription factor, regulating the expression of both MAX-network and T-box family target genes. Functions as a repressor or an activator. Binds to 5'-AATTTCACACCTAGGTGTGAAATT-3' core sequence and seems to regulate MYC-MAX target genes. Suppresses transcriptional activation by MYC and inhibits MYC-dependent cell transformation. Function activated by heterodimerization with MAX. This heterodimerization serves the dual function of both generating an E-box-binding heterodimer and simultaneously blocking interaction of a corepressor. This chain is MAX gene-associated protein, found in Homo sapiens (Human).